A 662-amino-acid chain; its full sequence is MHLRGCACHLSLYCVYNDWENKIYRVPIFQCLFLEAETRSLKTFLIRGQSLDQESLNEIEVTRKETMLWDLQEQSNMMDKKIAAISSLIMNNGELLRKLSKFFVPLTVVLGDDGLEILEAYVCGEEPMLPLDTVPVILRCVGDYAALDTKHLLSNECTQASKKLRFGYSVMDFHFSLTVSDVKICFSHTDTGEAVCEKMKQIFYFSVCAFGGEQVLLVTPKNAYALLFDDDLCLLLLQSVFAFLHEKIFAVYKQVLVQLCEYIGPDLWPFGNERSVSFIGYPNLWLLSVSDLERRVPDTTYICREILSFCGLAPILGPRGRHAIPVIRELSVEMPGSETSLQRFRFNSQYVSSESLCFQTGPEDTHLFFSDSDMYVVTLPDCLRLLLKSTVPRAFLPCFDENATEIELLLKFMSRLQHRSYALFDAVIFMLDAFVSAFQRACTLMEMRWLLVRDLHVFYLTCDGKDSHVVMPLLQTAVENCWEKITEIKQRPAFQCMEISRCGFVFYARFFLSSGLSQSKEAHWTVTASKYLSACIRANKTGLCFASITVYFQDMMCVFIANRYNVSYWIEEFDPNDYCLEYHEGLLDCSRYTAVMSEDGQLVRQARGIALTDKINFSYYILVTLRVLRRWVESKFEDVEQAEFIRWENRMLYEHIHLLHLN.

This sequence belongs to the herpesviridae HEPA family. As to quaternary structure, associates with the primase and the helicase to form the helicase-primase complex. Interacts with the origin-binding protein. Interacts with the polymerase catalytic subunit.

The protein resides in the host nucleus. Its function is as follows. Component of the helicase/primase complex. Unwinds the DNA at the replication forks and generates single-stranded DNA for both leading and lagging strand synthesis. The primase synthesizes short RNA primers on the lagging strand that the polymerase presumably elongates using dNTPs. The primase-associated factor has no known catalytic activity in the complex and may serve to facilitate the formation of the replisome by directly interacting with the origin-binding protein and the polymerase. This Human herpesvirus 6B (strain Z29) (HHV-6 variant B) protein is DNA helicase/primase complex-associated protein (U74).